We begin with the raw amino-acid sequence, 227 residues long: ATP-dependent dethiobiotin synthetase BioD (227 aa).

13–18 (DIGKTY) is a binding site for ATP. Threonine 17 is a binding site for Mg(2+). Lysine 38 is a catalytic residue. A substrate-binding site is contributed by serine 42. Residues aspartate 55, 116–119 (EGSG), and 179–180 (NN) contribute to the ATP site. 2 residues coordinate Mg(2+): aspartate 55 and glutamate 116.

This sequence belongs to the dethiobiotin synthetase family. In terms of assembly, homodimer. Mg(2+) is required as a cofactor.

The protein localises to the cytoplasm. It catalyses the reaction (7R,8S)-7,8-diammoniononanoate + CO2 + ATP = (4R,5S)-dethiobiotin + ADP + phosphate + 3 H(+). It participates in cofactor biosynthesis; biotin biosynthesis; biotin from 7,8-diaminononanoate: step 1/2. Catalyzes a mechanistically unusual reaction, the ATP-dependent insertion of CO2 between the N7 and N8 nitrogen atoms of 7,8-diaminopelargonic acid (DAPA, also called 7,8-diammoniononanoate) to form a ureido ring. The sequence is that of ATP-dependent dethiobiotin synthetase BioD from Clostridium botulinum (strain Langeland / NCTC 10281 / Type F).